Reading from the N-terminus, the 336-residue chain is Methionine import ATP-binding protein MetN (336 aa).

One can recognise an ABC transporter domain in the interval 2 to 254 (IKIKNLKKYY…PNAKMKEFLG (253 aa)). 34 to 41 (GHSGAGKS) serves as a coordination point for ATP.

It belongs to the ABC transporter superfamily. Methionine importer (TC 3.A.1.24) family. In terms of assembly, the complex is composed of two ATP-binding proteins (MetN), two transmembrane proteins (MetI) and a solute-binding protein (MetQ).

It is found in the cell inner membrane. The enzyme catalyses L-methionine(out) + ATP + H2O = L-methionine(in) + ADP + phosphate + H(+). The catalysed reaction is D-methionine(out) + ATP + H2O = D-methionine(in) + ADP + phosphate + H(+). Part of the ABC transporter complex MetNIQ involved in methionine import. Responsible for energy coupling to the transport system. This is Methionine import ATP-binding protein MetN from Campylobacter jejuni subsp. jejuni serotype O:2 (strain ATCC 700819 / NCTC 11168).